We begin with the raw amino-acid sequence, 400 residues long: Mu-type opioid receptor (400 aa).

At 1–68 (MDSSAVPTNA…CPPTGSPSMI (68 aa)) the chain is on the extracellular side. 5 N-linked (GlcNAc...) asparagine glycosylation sites follow: Asn-9, Asn-12, Asn-33, Asn-40, and Asn-48. The helical transmembrane segment at 69–93 (TAITIMALYSIVCVVGLFGNFLVMY) threads the bilayer. The Cytoplasmic segment spans residues 94–106 (VIVRYTKMKTATN). The chain crosses the membrane as a helical span at residues 107 to 131 (IYIFNLALADALVTSTLPFQSVNYL). At 132–142 (MGTWPFGTILC) the chain is on the extracellular side. A disulfide bridge connects residues Cys-142 and Cys-219. Residues 143 to 165 (KIVISIDYYNMSTSIFTLCTMSV) traverse the membrane as a helical segment. The Cytoplasmic segment spans residues 166 to 185 (DRYIAVCHPVKALDFRTPRN). The residue at position 168 (Tyr-168) is a Phosphotyrosine. The chain crosses the membrane as a helical span at residues 186 to 207 (AKIINVCNWILSSAIGLPVMFM). Residues 208–230 (ATTKYRQGSIDCTLTFSHPSWYW) are Extracellular-facing. Residues 231 to 255 (ENLLKICVFIFAFIMPVLIITVCYG) form a helical membrane-spanning segment. Residues 256 to 283 (LMILRLKSVRMLSGSKEKDRNLRRITRM) are Cytoplasmic-facing. A helical membrane pass occupies residues 284–306 (VLVVVAVFIICWTPIHIYVIIKA). Residues 307–314 (LVTIPETT) lie on the Extracellular side of the membrane. The helical transmembrane segment at 315-338 (FQTVSWHFCIALGYTNSCLNPVLY) threads the bilayer. The NPxxY; plays a role in stabilizing the activated conformation of the receptor motif lies at 334 to 338 (NPVLY). Residues 339–400 (AFLDEDFKRC…NLEAETAPLP (62 aa)) lie on the Cytoplasmic side of the membrane. Cys-353 carries S-palmitoyl cysteine lipidation. Residues 364-386 (NSTRIRQNTRDHPSTANTVDRTN) form a disordered region. Ser-365 bears the Phosphoserine mark. Thr-372 is subject to Phosphothreonine. Position 377 is a phosphoserine (Ser-377). Position 396 is a phosphothreonine (Thr-396).

It belongs to the G-protein coupled receptor 1 family. In terms of assembly, forms homooligomers and heterooligomers with other GPCRs, such as OPRD1, OPRK1, OPRL1, NPFFR2, ADRA2A, SSTR2, CNR1 and CCR5 (probably in dimeric forms). Interacts with heterotrimeric G proteins; interaction with a heterotrimeric complex containing GNAI1, GNB1 and GNG2 stabilizes the active conformation of the receptor and increases its affinity for endomorphin-2, the synthetic opioid peptide DAMGO and for morphinan agonists. Interacts with PPL; the interaction disrupts agonist-mediated G-protein activation. Interacts (via C-terminus) with DNAJB4 (via C-terminus). Interacts with calmodulin; the interaction inhibits the constitutive activity of OPRM1; it abolishes basal and attenuates agonist-stimulated G-protein coupling. Interacts with FLNA, PLD2, RANBP9 and WLS and GPM6A. Interacts with RTP4. Interacts with SYP and GNAS. Interacts with RGS9, RGS17, RGS20, RGS4, PPP1R9B and HINT1. In terms of processing, phosphorylated. Differentially phosphorylated in basal and agonist-induced conditions. Agonist-mediated phosphorylation modulates receptor internalization. Phosphorylated by GRK2 in a agonist-dependent manner. Phosphorylation at Tyr-168 requires receptor activation, is dependent on non-receptor protein tyrosine kinase Src and results in a decrease in agonist efficacy by reducing G-protein coupling efficiency. Phosphorylated on tyrosine residues; the phosphorylation is involved in agonist-induced G-protein-independent receptor down-regulation. Phosphorylation at Ser-377 is involved in G-protein-dependent but not beta-arrestin-dependent activation of the ERK pathway. Post-translationally, ubiquitinated. A basal ubiquitination seems not to be related to degradation. Ubiquitination is increased upon formation of OPRM1:OPRD1 oligomers leading to proteasomal degradation; the ubiquitination is diminished by RTP4.

The protein localises to the cell membrane. Its subcellular location is the cell projection. The protein resides in the axon. It localises to the perikaryon. It is found in the dendrite. The protein localises to the endosome. Functionally, receptor for endogenous opioids such as beta-endorphin and endomorphin. Receptor for natural and synthetic opioids including morphine, heroin, DAMGO, fentanyl, etorphine, buprenorphin and methadone. Also activated by enkephalin peptides, such as Met-enkephalin or Met-enkephalin-Arg-Phe, with higher affinity for Met-enkephalin-Arg-Phe. Agonist binding to the receptor induces coupling to an inactive GDP-bound heterotrimeric G-protein complex and subsequent exchange of GDP for GTP in the G-protein alpha subunit leading to dissociation of the G-protein complex with the free GTP-bound G-protein alpha and the G-protein beta-gamma dimer activating downstream cellular effectors. The agonist- and cell type-specific activity is predominantly coupled to pertussis toxin-sensitive G(i) and G(o) G alpha proteins, GNAI1, GNAI2, GNAI3 and GNAO1, and to a lesser extent to pertussis toxin-insensitive G alpha proteins GNAZ and GNA15. They mediate an array of downstream cellular responses, including inhibition of adenylate cyclase activity and both N-type and L-type calcium channels, activation of inward rectifying potassium channels, mitogen-activated protein kinase (MAPK), phospholipase C (PLC), phosphoinositide/protein kinase (PKC), phosphoinositide 3-kinase (PI3K) and regulation of NF-kappa-B. Also couples to adenylate cyclase stimulatory G alpha proteins. The selective temporal coupling to G-proteins and subsequent signaling can be regulated by RGSZ proteins, such as RGS9, RGS17 and RGS4. Phosphorylation by members of the GPRK subfamily of Ser/Thr protein kinases and association with beta-arrestins is involved in short-term receptor desensitization. Beta-arrestins associate with the GPRK-phosphorylated receptor and uncouple it from the G-protein thus terminating signal transduction. The phosphorylated receptor is internalized through endocytosis via clathrin-coated pits which involves beta-arrestins. The activation of the ERK pathway occurs either in a G-protein-dependent or a beta-arrestin-dependent manner and is regulated by agonist-specific receptor phosphorylation. Acts as a class A G-protein coupled receptor (GPCR) which dissociates from beta-arrestin at or near the plasma membrane and undergoes rapid recycling. Receptor down-regulation pathways are varying with the agonist and occur dependent or independent of G-protein coupling. Endogenous ligands induce rapid desensitization, endocytosis and recycling. Heterooligomerization with other GPCRs can modulate agonist binding, signaling and trafficking properties. Involved in neurogenesis. This Macaca mulatta (Rhesus macaque) protein is Mu-type opioid receptor (OPRM1).